A 290-amino-acid polypeptide reads, in one-letter code: 4-hydroxy-tetrahydrodipicolinate synthase (290 aa).

Pyruvate is bound at residue T48. Residue Y137 is the Proton donor/acceptor of the active site. K165 serves as the catalytic Schiff-base intermediate with substrate. I206 contributes to the pyruvate binding site.

This sequence belongs to the DapA family. In terms of assembly, homotetramer; dimer of dimers.

It is found in the cytoplasm. It carries out the reaction L-aspartate 4-semialdehyde + pyruvate = (2S,4S)-4-hydroxy-2,3,4,5-tetrahydrodipicolinate + H2O + H(+). It functions in the pathway amino-acid biosynthesis; L-lysine biosynthesis via DAP pathway; (S)-tetrahydrodipicolinate from L-aspartate: step 3/4. Catalyzes the condensation of (S)-aspartate-beta-semialdehyde [(S)-ASA] and pyruvate to 4-hydroxy-tetrahydrodipicolinate (HTPA). The polypeptide is 4-hydroxy-tetrahydrodipicolinate synthase (Ligilactobacillus salivarius (strain UCC118) (Lactobacillus salivarius)).